The following is a 1431-amino-acid chain: Probable ATP-dependent RNA helicase spindle-E (1431 aa).

The Helicase ATP-binding domain occupies 127–294 (LAAIRENPVV…FAMSSSLPPV (168 aa)). ATP is bound at residue 140-147 (GETGCGKT). The DEAH box signature appears at 240–243 (DEVH). Positions 354-526 (QSQQSYEEAK…NSVLKAKELE (173 aa)) constitute a Helicase C-terminal domain. In terms of domain architecture, Tudor spans 937-1000 (AKAVTKGLQL…RLMSPQLKRD (64 aa)).

This sequence belongs to the DEAD box helicase family. DEAH subfamily.

It localises to the cytoplasm. It catalyses the reaction ATP + H2O = ADP + phosphate + H(+). Functionally, probable ATP-binding RNA helicase which plays a central role during spermatogenesis and oogenesis by repressing transposable elements and preventing their mobilization, which is essential for the germline integrity. Acts via the piRNA metabolic process, which mediates the repression of transposable elements during meiosis by forming complexes composed of piRNAs and Piwi and govern the methylation and subsequent repression of transposons. Involved in the repression of LTR retrotransposon copia. Also involved in telomere regulation by repressing specialized telomeric retroelements HeT-A, TAHRE, and TART; Drosophila telomeres being maintained by transposition of specialized telomeric retroelements. Involved in telomeric trans-silencing, a repression mechanism by which a transposon or a transgene inserted in subtelomeric heterochromatin has the capacity to repress in trans in the female germline, a homologous transposon, or transgene located in euchromatin. Involved in the repression of testis-expressed Stellate genes by the homologous Su(Ste) repeats. Required for anteroposterior and dorsoventral axis formation during oogenesis. The protein is Probable ATP-dependent RNA helicase spindle-E (spn-E) of Drosophila mojavensis (Fruit fly).